The following is a 330-amino-acid chain: Tryptophan--tRNA ligase (330 aa).

ATP contacts are provided by residues Gln-10–Ser-12 and Gly-18–Asn-19. The 'HIGH' region motif lies at Pro-11–Asn-19. Asp-133 lines the L-tryptophan pocket. Residues Gly-145 to Asp-147, Ile-184, and Lys-193 to Ser-197 contribute to the ATP site. Positions Lys-193 to Ser-197 match the 'KMSKS' region motif.

It belongs to the class-I aminoacyl-tRNA synthetase family. In terms of assembly, homodimer.

The protein localises to the cytoplasm. The catalysed reaction is tRNA(Trp) + L-tryptophan + ATP = L-tryptophyl-tRNA(Trp) + AMP + diphosphate + H(+). Functionally, catalyzes the attachment of tryptophan to tRNA(Trp). The chain is Tryptophan--tRNA ligase from Bacillus subtilis (strain 168).